The sequence spans 256 residues: tRNA pseudouridine synthase A (256 aa).

Residue aspartate 55 is the Nucleophile of the active site. Tyrosine 113 is a binding site for substrate.

Belongs to the tRNA pseudouridine synthase TruA family. In terms of assembly, homodimer.

The enzyme catalyses uridine(38/39/40) in tRNA = pseudouridine(38/39/40) in tRNA. Its function is as follows. Formation of pseudouridine at positions 38, 39 and 40 in the anticodon stem and loop of transfer RNAs. The sequence is that of tRNA pseudouridine synthase A from Limosilactobacillus reuteri (strain DSM 20016) (Lactobacillus reuteri).